The chain runs to 533 residues: WUSCHEL-related homeobox 7 (533 aa).

2 disordered regions span residues 1–74 (MASS…NPRP) and 125–212 (SKNK…STQA). The span at 28–41 (AGSPPSLLSGSSAG) shows a compositional bias: low complexity. Residues 59–68 (GEERVPDPKP) are compositionally biased toward basic and acidic residues. Residues 65 to 129 (DPKPRWNPRP…NRKSRSKNKL (65 aa)) constitute a DNA-binding region (homeobox; WUS-type). Over residues 132–143 (GGTGRAGLGLGG) the composition is skewed to gly residues. Over residues 161–174 (FTPPPPILPAPQPV) the composition is skewed to pro residues. The span at 175-202 (QPQQQLVSPVAAPTSSSSSSSDRSSGSS) shows a compositional bias: low complexity.

This sequence belongs to the WUS homeobox family.

It localises to the nucleus. Transcription factor which may be involved in developmental processes. This is WUSCHEL-related homeobox 7 (WOX7) from Oryza sativa subsp. japonica (Rice).